Consider the following 635-residue polypeptide: Threonine--tRNA ligase (635 aa).

Residues 1–61 (MITVRLPDGS…EKDSDLAIIT (61 aa)) form the TGS domain. The segment at 242 to 533 (DHRKLGKQLD…LIEHYAGALP (292 aa)) is catalytic. Zn(2+)-binding residues include C333, H384, and H510.

It belongs to the class-II aminoacyl-tRNA synthetase family. In terms of assembly, homodimer. It depends on Zn(2+) as a cofactor.

It is found in the cytoplasm. The enzyme catalyses tRNA(Thr) + L-threonine + ATP = L-threonyl-tRNA(Thr) + AMP + diphosphate + H(+). Catalyzes the attachment of threonine to tRNA(Thr) in a two-step reaction: L-threonine is first activated by ATP to form Thr-AMP and then transferred to the acceptor end of tRNA(Thr). Also edits incorrectly charged L-seryl-tRNA(Thr). The protein is Threonine--tRNA ligase of Janthinobacterium sp. (strain Marseille) (Minibacterium massiliensis).